Consider the following 305-residue polypeptide: RNA-binding protein rnp-1 (305 aa).

The 70-residue stretch at 3–72 folds into the RRM domain; sequence SKLFVGNLPD…KVVNIKKSTS (70 aa). The segment at 84 to 97 adopts a CCHC-type zinc-finger fold; that stretch reads CFRCQSDEHRTPQC. The segment at 284–305 is disordered; the sequence is QQIQHQQATGSPAPVPAPPRLY. Pro residues predominate over residues 296–305; that stretch reads APVPAPPRLY.

In terms of tissue distribution, expressed throughout the germline.

Functionally, RNA-binding protein that is required for the germ line to transition from spermatogenesis to oogenesis and allow for normal oocyte development. In Caenorhabditis elegans, this protein is RNA-binding protein rnp-1.